Reading from the N-terminus, the 197-residue chain is uncharacterized protein (197 aa).

It belongs to the methyltransferase superfamily.

This is an uncharacterized protein from Mycobacterium bovis (strain ATCC BAA-935 / AF2122/97).